We begin with the raw amino-acid sequence, 246 residues long: Probable transcriptional regulatory protein YebC (246 aa).

The segment at 1-20 (MAGHSKWANTRHRKAAQDAK) is disordered.

Belongs to the TACO1 family.

Its subcellular location is the cytoplasm. This is Probable transcriptional regulatory protein YebC from Salmonella typhimurium (strain LT2 / SGSC1412 / ATCC 700720).